Reading from the N-terminus, the 594-residue chain is Lipolysis-stimulated lipoprotein receptor (594 aa).

The N-terminal stretch at 1–35 (MAPAASACAGAPGSHPATTIFVCLFLIIYCPDRAS) is a signal peptide. Residues 36-206 (AIQVTVPDPY…PGFRAGPLED (171 aa)) lie on the Extracellular side of the membrane. Positions 89 to 181 (PASVDNQLNA…DLDGNNEAYA (93 aa)) constitute an Ig-like V-type domain. The cysteines at positions 113 and 165 are disulfide-linked. Residues 207–227 (WLFVVVVCLASLLFFLLLGIC) traverse the membrane as a helical segment. The Cytoplasmic segment spans residues 228–594 (WCQCCPHTCC…LALSRESLVV (367 aa)). Residue Thr-283 is modified to Phosphothreonine. A Phosphoserine; by MAPK8 and MAPK9 modification is found at Ser-308. Phosphoserine is present on residues Ser-314, Ser-332, Ser-375, and Ser-379. Over residues 375-387 (SEVTSLHEDDWRS) the composition is skewed to basic and acidic residues. The disordered stretch occupies residues 375–594 (SEVTSLHEDD…LALSRESLVV (220 aa)). At Thr-396 the chain carries Phosphothreonine. A phosphoserine mark is found at Ser-407, Ser-410, and Ser-436. The segment covering 435 to 444 (RSVDALDDIN) has biased composition (basic and acidic residues). The span at 445–460 (RPGSTESGRSSPPSSG) shows a compositional bias: low complexity. Ser-471 and Ser-473 each carry phosphoserine. Residues 472 to 550 (RSRDDLYDPD…GAGERRRVYR (79 aa)) show a composition bias toward basic and acidic residues. Tyr-478 is modified (phosphotyrosine). At Ser-576 the chain carries Phosphoserine. Residue Lys-583 forms a Glycyl lysine isopeptide (Lys-Gly) (interchain with G-Cter in ubiquitin) linkage. Phosphoserine occurs at positions 588 and 591.

It belongs to the immunoglobulin superfamily. LISCH7 family. Homotrimer or homotetramer. Assembles into cell-cell contacts. Interacts (via the cytoplasmic domain) with MARVELD2 (via C-terminal cytoplasmic domain); the interaction is required to recruit MARVELD2 to tricellular contacts. Interacts with OCLN. Phosphorylation at Ser-308 by MAPK8/JNK1 and MAPK9/JNK2 may be required for exclusive localization at tricellular tight junstions. Post-translationally, polyubiquitinated at Lys-583 via 'Lys-63'-linked ubiquitin chains; deubiquitinated by USP53. As to expression, expressed in epithelial tissues (at protein level). Specifically expressed in liver and to a lower extent in kidney (at protein level). Also detected in brain, testis, ovaries, adrenal gland, intestine, muscle, and lung. In colon, only expressed in the lower portion of crypts. Expressed in the liver. In terms of tissue distribution, expressed in liver, stomach, small intestine and colon. Also detected in other epithelial tissues.

The protein resides in the cell membrane. The protein localises to the cell junction. It is found in the tight junction. In terms of biological role, probable role in the clearance of triglyceride-rich lipoprotein from blood. Binds chylomicrons, LDL and VLDL in presence of free fatty acids and allows their subsequent uptake in the cells. Maintains epithelial barrier function by recruiting MARVELD2/tricellulin to tricellular tight junctions. In Mus musculus (Mouse), this protein is Lipolysis-stimulated lipoprotein receptor.